The primary structure comprises 178 residues: Ribosome maturation factor RimP (178 aa).

The protein belongs to the RimP family.

The protein localises to the cytoplasm. Functionally, required for maturation of 30S ribosomal subunits. The polypeptide is Ribosome maturation factor RimP (Maricaulis maris (strain MCS10) (Caulobacter maris)).